A 329-amino-acid polypeptide reads, in one-letter code: Cytosolic sulfotransferase 6 (329 aa).

74-79 (KCGTTW) is a binding site for 3'-phosphoadenylyl sulfate. Histidine 140 (proton acceptor) is an active-site residue. Residues arginine 162, serine 170, and 295 to 297 (RKG) contribute to the 3'-phosphoadenylyl sulfate site.

This sequence belongs to the sulfotransferase 1 family.

It is found in the cytoplasm. Functionally, sulfotransferase that utilizes 3'-phospho-5'-adenylyl sulfate (PAPS) as sulfonate donor. This Arabidopsis thaliana (Mouse-ear cress) protein is Cytosolic sulfotransferase 6 (SOT6).